The primary structure comprises 1083 residues: Error-prone DNA polymerase (1083 aa).

Belongs to the DNA polymerase type-C family. DnaE2 subfamily.

It is found in the cytoplasm. It catalyses the reaction DNA(n) + a 2'-deoxyribonucleoside 5'-triphosphate = DNA(n+1) + diphosphate. DNA polymerase involved in damage-induced mutagenesis and translesion synthesis (TLS). It is not the major replicative DNA polymerase. The sequence is that of Error-prone DNA polymerase from Xanthomonas oryzae pv. oryzae (strain PXO99A).